The sequence spans 184 residues: Elongation factor P (184 aa).

Belongs to the elongation factor P family.

It is found in the cytoplasm. The protein operates within protein biosynthesis; polypeptide chain elongation. Its function is as follows. Involved in peptide bond synthesis. Stimulates efficient translation and peptide-bond synthesis on native or reconstituted 70S ribosomes in vitro. Probably functions indirectly by altering the affinity of the ribosome for aminoacyl-tRNA, thus increasing their reactivity as acceptors for peptidyl transferase. In Paracidovorax citrulli (strain AAC00-1) (Acidovorax citrulli), this protein is Elongation factor P.